A 730-amino-acid chain; its full sequence is Sodium-dependent neutral amino acid transporter B(0)AT2 (730 aa).

Residues 1–24 (MPKNSKVVKRELDDDVTESVKDLL) form a disordered region. At 1-70 (MPKNSKVVKR…RPAWSSKLQY (70 aa)) the chain is on the extracellular side. Phosphoserine occurs at positions 25 and 55. 3 helical membrane passes run 71 to 91 (ILAQ…PYLC), 97 to 117 (GAYL…LFFL), and 149 to 169 (VVCY…LFYF). Topologically, residues 170 to 223 (SQSFQQPLPWDQCPLVKNASHTFVEPECEQSSATTYYWYREALNISSSISESGG) are cytoplasmic. The next 2 helical transmembrane spans lie at 224-244 (LNWK…LAMI) and 253-273 (IIYF…IRAL). Asn276 carries an N-linked (GlcNAc...) asparagine glycan. A run of 2 helical transmembrane segments spans residues 302–322 (AATQ…AFSS) and 335–355 (VLVS…VFAV). Residues 356-458 (LGFKANVINE…AMTHFPASPF (103 aa)) are Cytoplasmic-facing. The next 5 membrane-spanning stretches (helical) occupy residues 459-479 (WSVM…FGTI), 494-514 (KEIL…IFVQ), 530-550 (TLPL…VYGI), 575-595 (YVSP…MGLS), and 619-639 (LVVC…VFIV). Residues 640-730 (RRFNLIDDSS…IMPDMPESDL (91 aa)) are Extracellular-facing. 3 positions are modified to phosphoserine: Ser687, Ser699, and Ser701.

This sequence belongs to the sodium:neurotransmitter symporter (SNF) (TC 2.A.22) family. SLC6A15 subfamily.

The protein resides in the membrane. It carries out the reaction L-leucine(in) + Na(+)(in) = L-leucine(out) + Na(+)(out). The enzyme catalyses L-isoleucine(in) + Na(+)(in) = L-isoleucine(out) + Na(+)(out). The catalysed reaction is L-methionine(in) + Na(+)(in) = L-methionine(out) + Na(+)(out). It catalyses the reaction L-proline(in) + Na(+)(in) = L-proline(out) + Na(+)(out). It carries out the reaction L-alanine(in) + Na(+)(in) = L-alanine(out) + Na(+)(out). The enzyme catalyses L-asparagine(in) + Na(+)(in) = L-asparagine(out) + Na(+)(out). The catalysed reaction is L-valine(in) + Na(+)(in) = L-valine(out) + Na(+)(out). It catalyses the reaction L-cysteine(in) + Na(+)(in) = L-cysteine(out) + Na(+)(out). It carries out the reaction L-glutamine(in) + Na(+)(in) = L-glutamine(out) + Na(+)(out). The enzyme catalyses L-serine(in) + Na(+)(in) = L-serine(out) + Na(+)(out). The catalysed reaction is L-threonine(in) + Na(+)(in) = L-threonine(out) + Na(+)(out). It catalyses the reaction L-pipecolate(in) + Na(+)(in) = L-pipecolate(out) + Na(+)(out). It carries out the reaction L-phenylalanine(in) + Na(+)(in) = L-phenylalanine(out) + Na(+)(out). Functions as a sodium-dependent neutral amino acid transporter. Exhibits preference for the branched-chain amino acids, particularly leucine, valine and isoleucine and methionine. Can also transport low-affinity substrates such as alanine, phenylalanine, glutamine and pipecolic acid. Mediates the saturable, pH-sensitive and electrogenic cotransport of proline and sodium ions with a stoichiometry of 1:1. May have a role as transporter for neurotransmitter precursors into neurons. In contrast to other members of the neurotransmitter transporter family, does not appear to be chloride-dependent. In Pongo abelii (Sumatran orangutan), this protein is Sodium-dependent neutral amino acid transporter B(0)AT2 (SLC6A15).